The sequence spans 585 residues: Mycosin-5 (585 aa).

Residues 1 to 39 form the signal peptide; the sequence is MQRFGTGSSRSWCGRAGTATIAAVLLASGALTGLPPAYA. Positions 83–521 constitute a Peptidase S8 domain; the sequence is PKYMEMLNLN…YGVVDPVAAL (439 aa). Catalysis depends on charge relay system residues Asp-109 and His-141. Residues 163 to 173 show a composition bias toward low complexity; it reads VPRRPVTIPTT. Residues 163–269 form a disordered region; that stretch reads VPRRPVTIPT…PALGPPPDAF (107 aa). 2 stretches are compositionally biased toward pro residues: residues 196-224 and 252-267; these read PAPPPEEGVPPGAPVPGPEPPPAPGPQPP and NPHPSAPSPALGPPPD. Ser-466 (charge relay system) is an active-site residue. The chain crosses the membrane as a helical span at residues 552–572; sequence VPIWVAAGGLAGALLIGGAVF.

Belongs to the peptidase S8 family.

It localises to the cell membrane. The polypeptide is Mycosin-5 (Mycobacterium tuberculosis (strain ATCC 25618 / H37Rv)).